The following is a 312-amino-acid chain: DNA-directed RNA polymerase subunit alpha (312 aa).

An alpha N-terminal domain (alpha-NTD) region spans residues 1 to 227 (MNNFYIKCLK…SFFSSLLENK (227 aa)). The tract at residues 243-312 (PKNPHTNIAI…KNKLGIVLSN (70 aa)) is alpha C-terminal domain (alpha-CTD).

It belongs to the RNA polymerase alpha chain family. In plastids the minimal PEP RNA polymerase catalytic core is composed of four subunits: alpha, beta, beta', and beta''. When a (nuclear-encoded) sigma factor is associated with the core the holoenzyme is formed, which can initiate transcription.

It is found in the plastid. The protein resides in the chloroplast. It catalyses the reaction RNA(n) + a ribonucleoside 5'-triphosphate = RNA(n+1) + diphosphate. Its function is as follows. DNA-dependent RNA polymerase catalyzes the transcription of DNA into RNA using the four ribonucleoside triphosphates as substrates. In Trieres chinensis (Marine centric diatom), this protein is DNA-directed RNA polymerase subunit alpha.